A 316-amino-acid chain; its full sequence is Apolipoprotein E (316 aa).

Positions 1 to 18 (MKVLWVALVVALLAGCQA) are cleaved as a signal peptide. Tandem repeats lie at residues 79 to 100 (VLME…GQLA), 101 to 122 (PMAQ…ARLG), 123 to 144 (SDME…AMLG), 145 to 166 (QSTE…KRLL), 167 to 188 (RDAD…EGAE), 189 to 210 (RSVS…SRAA), 211 to 232 (TLST…QKLH), and 233 to 254 (GRLE…QQLE). The 8 X 22 AA approximate tandem repeats stretch occupies residues 79–254 (VLMEETMKEV…RLDKMRQQLE (176 aa)). Methionine sulfoxide is present on Met142. Phosphoserine is present on Ser146. The LDL and other lipoprotein receptors binding stretch occupies residues 157–167 (HLRKLRKRLLR). Heparin is bound at residue 161–164 (LRKR). The interval 209-289 (AATLSTQAAQ…SWFEPLVGDM (81 aa)) is lipid-binding and lipoprotein association. Thr211 carries O-linked (GalNAc...) threonine glycosylation. 228–235 (RQKLHGRL) lines the heparin pocket. A homooligomerization region spans residues 265 to 316 (SQIRLQAEAFQARLRSWFEPLVGDMQRQWAGLVEKVQLALHLSPTSPPSENH). The tract at residues 277-289 (RLRSWFEPLVGDM) is specificity for association with VLDL.

This sequence belongs to the apolipoprotein A1/A4/E family. In terms of assembly, homotetramer. May interact with ABCA1; functionally associated with ABCA1 in the biogenesis of HDLs. May interact with APP/A4 amyloid-beta peptide; the interaction is extremely stable in vitro but its physiological significance is unclear. May interact with MAPT. May interact with MAP2. In the cerebrospinal fluid, interacts with secreted SORL1. Interacts with PMEL; this allows the loading of PMEL luminal fragment on ILVs to induce fibril nucleation. In terms of processing, APOE exists as multiple glycosylated and sialylated glycoforms within cells and in plasma. The extent of glycosylation and sialylation are tissue and context specific. Glycated in plasma VLDL. Post-translationally, phosphorylated by FAM20C in the extracellular medium.

It is found in the secreted. The protein localises to the extracellular space. It localises to the extracellular matrix. Its subcellular location is the extracellular vesicle. The protein resides in the endosome. It is found in the multivesicular body. In terms of biological role, APOE is an apolipoprotein, a protein associating with lipid particles, that mainly functions in lipoprotein-mediated lipid transport between organs via the plasma and interstitial fluids. APOE is a core component of plasma lipoproteins and is involved in their production, conversion and clearance. Apolipoproteins are amphipathic molecules that interact both with lipids of the lipoprotein particle core and the aqueous environment of the plasma. As such, APOE associates with chylomicrons, chylomicron remnants, very low density lipoproteins (VLDL) and intermediate density lipoproteins (IDL) but shows a preferential binding to high-density lipoproteins (HDL). It also binds a wide range of cellular receptors including the LDL receptor/LDLR and the very low-density lipoprotein receptor/VLDLR that mediate the cellular uptake of the APOE-containing lipoprotein particles. Finally, APOE also has a heparin-binding activity and binds heparan-sulfate proteoglycans on the surface of cells, a property that supports the capture and the receptor-mediated uptake of APOE-containing lipoproteins by cells. The chain is Apolipoprotein E (APOE) from Capra hircus aegagrus (Wild goat).